The sequence spans 506 residues: Cobyric acid synthase (506 aa).

Residues 251–448 (DITIAIVQLP…LHGLFDSDAF (198 aa)) form the GATase cobBQ-type domain. C332 serves as the catalytic Nucleophile. Residue H440 is part of the active site.

The protein belongs to the CobB/CobQ family. CobQ subfamily.

The protein operates within cofactor biosynthesis; adenosylcobalamin biosynthesis. Functionally, catalyzes amidations at positions B, D, E, and G on adenosylcobyrinic A,C-diamide. NH(2) groups are provided by glutamine, and one molecule of ATP is hydrogenolyzed for each amidation. The protein is Cobyric acid synthase of Salmonella arizonae (strain ATCC BAA-731 / CDC346-86 / RSK2980).